Reading from the N-terminus, the 364-residue chain is Tripartite motif-containing protein 54 (364 aa).

The RING-type zinc finger occupies 26–82 (CPICLEMFSKPVVILPCQHNLCRKCANDVFQASNPLWQSRGSTTVSSGGRFRCPSCR). The B box-type zinc-finger motif lies at 121–163 (EQHLMCEEHEDEKINIYCLSCEVPTCSLCKVFGAHKDCEVAPL). The Zn(2+) site is built by cysteine 126, histidine 129, cysteine 149, and histidine 155. Positions 168–211 (KRQKSELSDGIAMLVAGNDRVQAVITQMEEVCQTIEDNSRRQKQ) are mediates microtubule-binding and homooligomerization. Residues 194-252 (QMEEVCQTIEDNSRRQKQLLNQKFETLCAVLEERKGELLQALARVQEEKLQRVRSLIRQ) are a coiled coil. Positions 271–329 (MEEPQMALYLQQAKELINKVGAMSKVELAGRPEPGYESMEQFSVIVEHVAEMLRTIDFQ) constitute a COS domain. Residues 328 to 364 (FQPGASGDEEDDEVTLDGEEGNTGLEEERLDGPEGLH) form a disordered region. Residues 334–347 (GDEEDDEVTLDGEE) are compositionally biased toward acidic residues. Positions 353 to 364 (EEERLDGPEGLH) are enriched in basic and acidic residues.

As to quaternary structure, homooligomer and heterooligomer. Interacts with TRIM63 and probably with TRIM55. Interacts with tubulin.

Its subcellular location is the cytoplasm. It is found in the cytoskeleton. It localises to the myofibril. The protein localises to the sarcomere. The protein resides in the z line. Functionally, may bind and stabilize microtubules during myotubes formation. This chain is Tripartite motif-containing protein 54 (Trim54), found in Rattus norvegicus (Rat).